The following is a 290-amino-acid chain: NAD kinase (290 aa).

The active-site Proton acceptor is D72. NAD(+) contacts are provided by residues 72-73 (DG), 146-147 (NE), R174, D176, and 187-192 (TAYALS).

This sequence belongs to the NAD kinase family. Requires a divalent metal cation as cofactor.

Its subcellular location is the cytoplasm. The enzyme catalyses NAD(+) + ATP = ADP + NADP(+) + H(+). Its function is as follows. Involved in the regulation of the intracellular balance of NAD and NADP, and is a key enzyme in the biosynthesis of NADP. Catalyzes specifically the phosphorylation on 2'-hydroxyl of the adenosine moiety of NAD to yield NADP. The polypeptide is NAD kinase (Methylococcus capsulatus (strain ATCC 33009 / NCIMB 11132 / Bath)).